A 763-amino-acid chain; its full sequence is MDHLNEATQGKEHSEMSNNVSDPKGPPAKIARLEQNGSPLGRGRLGSTGAKMQGVPLKHSGHLMKTNLRKGTMLPVFCVVEHYENAIEYDCKEEHAEFVLVRKDMLFNQLIEMALLSLGYSHSSAAQAKGLIQVGKWNPVPLSYVTDAPDATVADMLQDVYHVVTLKIQLHSCPKLEDLPPEQWSHTTVRNALKDLLKDMNQSSLAKECPLSQSMISSIVNSTYYANVSAAKCQEFGRWYKHFKKTKDMMVEMDSLSELSQQGANHVNFGQQPVPGNTAEQPPSPAQLSHGSQPSVRTPLPNLHPGLVSTPISPQLVNQQLVMAQLLNQQYAVNRLLAQQSLNQQYLNHPPPVSRSMNKPLEQQVSTNTEVSSEIYQWVRDELKRAGISQAVFARVAFNRTQGLLSEILRKEEDPKTASQSLLVNLRAMQNFLQLPEAERDRIYQDERERSLNAASAMGPAPLISTPPSRPPQVKTATIATERNGKPENNTMNINASIYDEIQQEMKRAKVSQALFAKVAATKSQGWLCELLRWKEDPSPENRTLWENLSMIRRFLSLPQPERDAIYEQESNAVHHHGDRPPHIIHVPAEQIQQQQQQQQQQQQQQQAPPPPQPQQQPQTGPRLPPRQPTVASPAESDEENRQKTRPRTKISVEALGILQSFIQDVGLYPDEEAIQTLSAQLDLPKYTIIKFFQNQRYYLKHHGKLKDNSGLEVDVAEYKEEELLKDLEESVQDKNTNTLFSVKLEEELSVEGNTDINTDLKD.

Positions 1 to 15 (MDHLNEATQGKEHSE) are enriched in basic and acidic residues. The interval 1–54 (MDHLNEATQGKEHSEMSNNVSDPKGPPAKIARLEQNGSPLGRGRLGSTGAKMQG) is disordered. Positions 20 to 40 (VSDPKGPPAKIARLEQNGSPL) match the Nuclear localization signal motif. A Glycyl lysine isopeptide (Lys-Gly) (interchain with G-Cter in SUMO2) cross-link involves residue Lys51. The CMP domain occupies 71-172 (GTMLPVFCVV…VVTLKIQLHS (102 aa)). Lys136 bears the N6-acetyllysine mark. The short motif at 139–143 (PVPLS) is the Protein interaction element. In terms of domain architecture, CUTL spans 175–248 (KLEDLPPEQW…WYKHFKKTKD (74 aa)). Ser185 carries the post-translational modification Phosphoserine. The segment at 224-278 (YYANVSAAKCQEFGRWYKHFKKTKDMMVEMDSLSELSQQGANHVNFGQQPVPGNT) is nuclear matrix targeting sequence (NMTS). A compositionally biased stretch (polar residues) spans 266 to 296 (HVNFGQQPVPGNTAEQPPSPAQLSHGSQPSV). The tract at residues 266-307 (HVNFGQQPVPGNTAEQPPSPAQLSHGSQPSVRTPLPNLHPGL) is disordered. DNA-binding regions (CUT) lie at residues 361–448 (LEQQ…QDER) and 484–571 (NGKP…EQES). Residues Gln390, 400–410 (RTQGLLSEILR), and Asn425 each bind DNA. Positions 591-607 (QIQQQQQQQQQQQQQQQ) are enriched in low complexity. The segment at 591-649 (QIQQQQQQQQQQQQQQQAPPPPQPQQQPQTGPRLPPRQPTVASPAESDEENRQKTRPRT) is disordered. Ser637 is subject to Phosphoserine. The homeobox DNA-binding region spans 645–704 (TRPRTKISVEALGILQSFIQDVGLYPDEEAIQTLSAQLDLPKYTIIKFFQNQRYYLKHHG). Lys744 is covalently cross-linked (Glycyl lysine isopeptide (Lys-Gly) (interchain with G-Cter in SUMO)).

Belongs to the CUT homeobox family. Interacts with CUX1 (via DNA-binding domains); the interaction inhibits the attachment of both proteins to DNA. Homodimer. Part of the nuclear protein complex gamma-globin promoter and enhancer binding factor (gamma-PE) composed at least of SATB1 and HOXB2. Interaction with CtBP1 when not acetylated stabilizes attachment to DNA and promotes transcription repression. Interacts with PCAF. Interacts with sumoylated PML and HDAC1 via the CMP domain. Interacts also with DYNLT3 and POLR2J2. Binds to EP300. As to quaternary structure, (Microbial infection) Interacts (via the CMP domain) with HIV-1 Tat. Post-translationally, sumoylated. Sumoylation promotes cleavage by caspases. Phosphorylated by PKC. Acetylated by PCAF. Phosphorylated form interacts with HDAC1, but unphosphorylated form interacts with PCAF. DNA binding properties are activated by phosphorylation and inactivated by acetylation. In opposition, gene expression is down-regulated by phosphorylation but up-regulated by acetylation. In terms of processing, cleaved at Asp-254 by caspase-3 and caspase-6 during T-cell apoptosis in thymus and during B-cell stimulation. The cleaved forms cannot dimerize and lose transcription regulation function because of impaired DNA and chromatin association. As to expression, expressed predominantly in thymus.

The protein localises to the nucleus matrix. It is found in the nucleus. It localises to the PML body. Its function is as follows. Crucial silencing factor contributing to the initiation of X inactivation mediated by Xist RNA that occurs during embryogenesis and in lymphoma. Binds to DNA at special AT-rich sequences, the consensus SATB1-binding sequence (CSBS), at nuclear matrix- or scaffold-associated regions. Thought to recognize the sugar-phosphate structure of double-stranded DNA. Transcriptional repressor controlling nuclear and viral gene expression in a phosphorylated and acetylated status-dependent manner, by binding to matrix attachment regions (MARs) of DNA and inducing a local chromatin-loop remodeling. Acts as a docking site for several chromatin remodeling enzymes (e.g. PML at the MHC-I locus) and also by recruiting corepressors (HDACs) or coactivators (HATs) directly to promoters and enhancers. Modulates genes that are essential in the maturation of the immune T-cell CD8SP from thymocytes. Required for the switching of fetal globin species, and beta- and gamma-globin genes regulation during erythroid differentiation. Plays a role in chromatin organization and nuclear architecture during apoptosis. Interacts with the unique region (UR) of cytomegalovirus (CMV). Alu-like motifs and SATB1-binding sites provide a unique chromatin context which seems preferentially targeted by the HIV-1 integration machinery. Moreover, HIV-1 Tat may overcome SATB1-mediated repression of IL2 and IL2RA (interleukin) in T-cells by binding to the same domain than HDAC1. Delineates specific epigenetic modifications at target gene loci, directly up-regulating metastasis-associated genes while down-regulating tumor-suppressor genes. Reprograms chromatin organization and the transcription profiles of breast tumors to promote growth and metastasis. Promotes neuronal differentiation of neural stem/progenitor cells in the adult subventricular zone, possibly by positively regulating the expression of NEUROD1. The chain is DNA-binding protein SATB1 from Homo sapiens (Human).